A 545-amino-acid polypeptide reads, in one-letter code: Chaperonin GroEL (545 aa).

ATP is bound by residues 30–33 (TLGP), K51, 87–91 (DGTTT), G415, 479–481 (NAA), and D495. A disordered region spans residues 526 to 545 (KEDKPDLGGAGGMGGMGGMM). Residues 533–545 (GGAGGMGGMGGMM) are compositionally biased toward gly residues.

This sequence belongs to the chaperonin (HSP60) family. As to quaternary structure, forms a cylinder of 14 subunits composed of two heptameric rings stacked back-to-back. Interacts with the co-chaperonin GroES.

It is found in the cytoplasm. The catalysed reaction is ATP + H2O + a folded polypeptide = ADP + phosphate + an unfolded polypeptide.. Together with its co-chaperonin GroES, plays an essential role in assisting protein folding. The GroEL-GroES system forms a nano-cage that allows encapsulation of the non-native substrate proteins and provides a physical environment optimized to promote and accelerate protein folding. The sequence is that of Chaperonin GroEL from Sodalis glossinidius.